A 205-amino-acid polypeptide reads, in one-letter code: Thiamine-phosphate synthase (205 aa).

4-amino-2-methyl-5-(diphosphooxymethyl)pyrimidine contacts are provided by residues 35–39 (QYRDK) and N67. D68 and D86 together coordinate Mg(2+). Residue T105 coordinates 4-amino-2-methyl-5-(diphosphooxymethyl)pyrimidine. 132–134 (SLT) is a binding site for 2-[(2R,5Z)-2-carboxy-4-methylthiazol-5(2H)-ylidene]ethyl phosphate. Residue K135 participates in 4-amino-2-methyl-5-(diphosphooxymethyl)pyrimidine binding. 2-[(2R,5Z)-2-carboxy-4-methylthiazol-5(2H)-ylidene]ethyl phosphate is bound at residue G162.

Belongs to the thiamine-phosphate synthase family. Mg(2+) is required as a cofactor.

It carries out the reaction 2-[(2R,5Z)-2-carboxy-4-methylthiazol-5(2H)-ylidene]ethyl phosphate + 4-amino-2-methyl-5-(diphosphooxymethyl)pyrimidine + 2 H(+) = thiamine phosphate + CO2 + diphosphate. It catalyses the reaction 2-(2-carboxy-4-methylthiazol-5-yl)ethyl phosphate + 4-amino-2-methyl-5-(diphosphooxymethyl)pyrimidine + 2 H(+) = thiamine phosphate + CO2 + diphosphate. The enzyme catalyses 4-methyl-5-(2-phosphooxyethyl)-thiazole + 4-amino-2-methyl-5-(diphosphooxymethyl)pyrimidine + H(+) = thiamine phosphate + diphosphate. It functions in the pathway cofactor biosynthesis; thiamine diphosphate biosynthesis; thiamine phosphate from 4-amino-2-methyl-5-diphosphomethylpyrimidine and 4-methyl-5-(2-phosphoethyl)-thiazole: step 1/1. In terms of biological role, condenses 4-methyl-5-(beta-hydroxyethyl)thiazole monophosphate (THZ-P) and 2-methyl-4-amino-5-hydroxymethyl pyrimidine pyrophosphate (HMP-PP) to form thiamine monophosphate (TMP). The sequence is that of Thiamine-phosphate synthase from Pseudomonas syringae pv. syringae (strain B728a).